The following is an 844-amino-acid chain: MDAAALQYENQKLVQQLEAQKSKMRALEGKFKELRDEQCSYDNTLICLNKMWNQLIDDLVLLGVRAGGDLNGLQALDHEEMSEESLESCPSEEIFLFRLLNSRNFRNNDDSSLSKLVEEALALRYSTTVTLMKSLQEAFAVQQARSESLSLALNGQNSSEDVIVALENHNDYLKEVVDNLRQAVSIINRKHEKYLDEIEAFKNNQSRELHEVKCLSGELEESMAELEESRRKLAVLQLQTGGGSLMNTSAPNGVNGSVSTDKSSDKGMGWRDLKDAVEEAKTLAANRLFELHETQEDNLILSKQLEDIQDQLKDENYIVTSKPYTILSDQLHHLNAEIERYRGLVEVLQNEKDQLMQKEEEMLAKAESVDAVQQSITTYKAKIEDLEHEIQKLMAEKNDLEIKAEEALQDSGKKDFKDEIHVMAASLSKEMELLDNQMNRSKDAASEALALREEADYLRTLLAKKIDEQKEISDRYNTQVTEIKSLKALIETLDQEKQELQFIVDMLGKECSESRAISEIEESENRARKQAEYLRKCLEEHNLELRVKAANEAETACQQRLSIAEAELEDLRAKVDASERDVMKLKESIRIKEAEVDGHISEIETIGQAYEDMQTQNQHLLQQVADRDDFNIKLVSDSVKMKQAYGSLLAEKNMLQKQLQHVNSSLESSKLKITSGEEQMKTYVAQAMKSSSENRHLAISLERTMLEVSDAEKELKWLRSATGSAEKEYEINQKKIAELKMELERERNERIKLEEEYEEVKNEVSELTSETEETTIQKLQDEIKECKAILKCGVCFDRPKEVVITKCFHLFCSPCIQRNLEIRHRKCPGCGTPFGQSDVREVKI.

Coiled coils occupy residues 1–38 (MDAA…RDEQ) and 160–240 (EDVI…QLQT). The interval 244–269 (SLMNTSAPNGVNGSVSTDKSSDKGMG) is disordered. Residues 245–261 (LMNTSAPNGVNGSVSTD) show a composition bias toward polar residues. 2 coiled-coil regions span residues 290–604 (ELHE…SEIE) and 640–670 (KMKQ…ESSK). Residues 792 to 831 (CGVCFDRPKEVVITKCFHLFCSPCIQRNLEIRHRKCPGCG) form an RING-type zinc finger.

It belongs to the BRE1 family.

Its subcellular location is the nucleus. The enzyme catalyses S-ubiquitinyl-[E2 ubiquitin-conjugating enzyme]-L-cysteine + [acceptor protein]-L-lysine = [E2 ubiquitin-conjugating enzyme]-L-cysteine + N(6)-ubiquitinyl-[acceptor protein]-L-lysine.. It participates in protein modification; protein ubiquitination. In terms of biological role, E3 ubiquitin-protein ligase that monoubiquitinates H2B to form H2BK143ub1. H2BK143ub1 gives a specific tag for epigenetic transcriptional activation and is also prerequisite for H3K4me and maybe H3K79me. It thereby plays a central role in histone code and gene regulation. Forms a ubiquitin ligase complex in cooperation with the E2 enzyme UBC2/RAD6. This Oryza sativa subsp. indica (Rice) protein is E3 ubiquitin-protein ligase BRE1-like 2 (BRE1B).